The chain runs to 93 residues: Sec-independent protein translocase protein TatA (93 aa).

Residues 1–21 (MGSLSPWHWAILAVVVILLFG) traverse the membrane as a helical segment. The segment at 45 to 93 (EMQSENKTETSALGAQSESSAANPTPVQSQRVDPPAPSEQGHSEARPAS) is disordered. The segment covering 53-75 (ETSALGAQSESSAANPTPVQSQR) has biased composition (polar residues).

This sequence belongs to the TatA/E family. In terms of assembly, the Tat system comprises two distinct complexes: a TatABC complex, containing multiple copies of TatA, TatB and TatC subunits, and a separate TatA complex, containing only TatA subunits. Substrates initially bind to the TatABC complex, which probably triggers association of the separate TatA complex to form the active translocon.

The protein localises to the cell membrane. Its function is as follows. Part of the twin-arginine translocation (Tat) system that transports large folded proteins containing a characteristic twin-arginine motif in their signal peptide across membranes. TatA could form the protein-conducting channel of the Tat system. The protein is Sec-independent protein translocase protein TatA of Mycolicibacterium paratuberculosis (strain ATCC BAA-968 / K-10) (Mycobacterium paratuberculosis).